The chain runs to 215 residues: Pyridoxine/pyridoxamine 5'-phosphate oxidase (215 aa).

Substrate is bound by residues 9–12 (RRDY) and Lys-69. Residues 64-69 (RVLLLK), 79-80 (FS), Lys-86, and Gln-108 contribute to the FMN site. Positions 126, 130, and 134 each coordinate substrate. FMN is bound by residues 143 to 144 (QS) and Trp-188. 194–196 (RLH) contacts substrate. Position 198 (Arg-198) interacts with FMN.

Belongs to the pyridoxamine 5'-phosphate oxidase family. As to quaternary structure, homodimer. It depends on FMN as a cofactor.

It catalyses the reaction pyridoxamine 5'-phosphate + O2 + H2O = pyridoxal 5'-phosphate + H2O2 + NH4(+). The enzyme catalyses pyridoxine 5'-phosphate + O2 = pyridoxal 5'-phosphate + H2O2. Its pathway is cofactor metabolism; pyridoxal 5'-phosphate salvage; pyridoxal 5'-phosphate from pyridoxamine 5'-phosphate: step 1/1. The protein operates within cofactor metabolism; pyridoxal 5'-phosphate salvage; pyridoxal 5'-phosphate from pyridoxine 5'-phosphate: step 1/1. Catalyzes the oxidation of either pyridoxine 5'-phosphate (PNP) or pyridoxamine 5'-phosphate (PMP) into pyridoxal 5'-phosphate (PLP). This chain is Pyridoxine/pyridoxamine 5'-phosphate oxidase, found in Ectopseudomonas mendocina (strain ymp) (Pseudomonas mendocina).